The primary structure comprises 672 residues: MRTALLEVGLEELPASEFHSILRQLEEKSAELLKAYRISSGSVEVFVGSRRFGVILNNLPERQEDFTEEKKGPPLNIAYDENGKPTRALEGFLRNNNASLENVVHREGYVYLSRVVEGKPVEEVLPDLFRDLVLGLNFRKPMRWGSGEHEYVRPVHWIVAMVDGRVLDLEIFGLRSSRISYGKRYHAGSIEIPDPERYYESLKKGFVISSHLERKKFVLEQIDEFEKRSGMKIERDEELIEEIVAITEYPRIVVGQFDRKYLELPEEIIVTAVKHHQRSFIAHKETLTNIFVAFQDGPQPPENVVKGYERVINARLEDARYYFQKDLETSLEKMNEKLKEIVFQEKLGTLYDKVERIKKISQRLCEDLKLPEMFTQKVLEAASICKADIASKVVYEFPELQGVMGRIYALREGINEEIATAIEDHYSEEPQTVIGSILGIADRIDTIVGNFAIGNVPTSSKDPYGLKSKADTIFRIIRKNEWDISLEELLTFASSLVKYHLSEELETFFAGRFYQFLINELGISFDVARAVNHLWKKPLRGILSAEALQEISEKPEFQDLFVGFERVHNITKNHDSTKFDGALFEKEEEKKLMNKFYEVKEKVLKALERLNYREALQYLIELKPYIDEYFDNVFVMVKRDDLRVNRLSFLKNIDELFMMVGDMTYLVKRSQV.

It belongs to the class-II aminoacyl-tRNA synthetase family. As to quaternary structure, tetramer of two alpha and two beta subunits.

It localises to the cytoplasm. It carries out the reaction tRNA(Gly) + glycine + ATP = glycyl-tRNA(Gly) + AMP + diphosphate. The chain is Glycine--tRNA ligase beta subunit from Thermotoga sp. (strain RQ2).